A 445-amino-acid chain; its full sequence is Argininosuccinate synthase (445 aa).

ATP contacts are provided by residues A17–S25 and A43. An L-citrulline-binding site is contributed by Y99. Residues G129 and T131 each contribute to the ATP site. Residues T131, N135, and D136 each contribute to the L-aspartate site. N135 serves as a coordination point for L-citrulline. D136 lines the ATP pocket. L-citrulline is bound by residues R139 and S192. D194 serves as a coordination point for ATP. Positions 201, 203, and 280 each coordinate L-citrulline.

This sequence belongs to the argininosuccinate synthase family. Type 2 subfamily. Homotetramer.

Its subcellular location is the cytoplasm. It carries out the reaction L-citrulline + L-aspartate + ATP = 2-(N(omega)-L-arginino)succinate + AMP + diphosphate + H(+). It participates in amino-acid biosynthesis; L-arginine biosynthesis; L-arginine from L-ornithine and carbamoyl phosphate: step 2/3. The chain is Argininosuccinate synthase from Burkholderia cenocepacia (strain ATCC BAA-245 / DSM 16553 / LMG 16656 / NCTC 13227 / J2315 / CF5610) (Burkholderia cepacia (strain J2315)).